Consider the following 98-residue polypeptide: MELSGEYVGCDGEPQRLRVSCEASGDADPLQSLSAGVVRMKELVAEFFGTLVEQDAQGLAEDPDDALDGDDEDDAEDENNSGRTNSDGPSAKRPKPAS.

N-acetylmethionine is present on Met-1. The segment at 55 to 98 (DAQGLAEDPDDALDGDDEDDAEDENNSGRTNSDGPSAKRPKPAS) is disordered. Residues 61–79 (EDPDDALDGDDEDDAEDEN) are compositionally biased toward acidic residues.

In terms of assembly, component of the EKC/KEOPS complex composed of at least GON7, TP53RK, TPRKB, OSGEP and LAGE3; the whole complex dimerizes.

It localises to the nucleus. Component of the EKC/KEOPS complex that is required for the formation of a threonylcarbamoyl group on adenosine at position 37 (t(6)A37) in tRNAs that read codons beginning with adenine. The complex is probably involved in the transfer of the threonylcarbamoyl moiety of threonylcarbamoyl-AMP (TC-AMP) to the N6 group of A37. GON7 plays a supporting role to the catalytic subunit OSGEP in the complex. This Mus musculus (Mouse) protein is EKC/KEOPS complex subunit GON7.